We begin with the raw amino-acid sequence, 424 residues long: Sulfate adenylyltransferase (424 aa).

It belongs to the sulfate adenylyltransferase family.

The catalysed reaction is sulfate + ATP + H(+) = adenosine 5'-phosphosulfate + diphosphate. It participates in sulfur metabolism; hydrogen sulfide biosynthesis; sulfite from sulfate: step 1/3. The chain is Sulfate adenylyltransferase from Desulfatibacillum aliphaticivorans.